The primary structure comprises 395 residues: LIM/homeobox protein Lhx3 (395 aa).

2 consecutive LIM zinc-binding domains span residues C28–D78 and C87–D141. Residues A154–K213 constitute a DNA-binding region (homeobox). Disordered regions lie at residues K208 to Y304 and G363 to P383. Polar residues predominate over residues D257 to S278.

Interacts with ldb1 and with the N-terminus of rnf12. In dorsal regions at neural tube and tailbud stages and in adults predominantly in the pituitary gland and weakly in the eye and brain.

The protein resides in the nucleus. In terms of biological role, transcription factor. May be involved in the specification and maintenance of differentiation of distinct neuronal and neuroendocrine tissues. Early marker for the pituitary and pineal lineages, it may be involved in specifying these lineages. This Xenopus laevis (African clawed frog) protein is LIM/homeobox protein Lhx3 (lhx3).